A 289-amino-acid polypeptide reads, in one-letter code: MKFAKGHGTQNDFVLLPDLNAQYSLTARAVAALCDRRRGLGADGLLRVTTAGAALAAGVFDRLPEGVAEDDWFMDYRNADGSIAEMCGNGVRVFAHYLHAGGLEHRSEFVVGSLAGPRPVVLHEADDTTADVTVEMGKAVRCGTGTATVGGRRFSGLAVDVGNPHLACVDEELTDAGLASLDVASPVAFDSTQFPHGVNVEILTAPRDGAVAMRVHERGVGETRSCGTGTVAAAVAALDHQGARTGTLRVRIPGGEVCVTVTETDSYLRGPSVLLAHGELAEQWWAAQH.

Substrate is bound by residues asparagine 11 and asparagine 78. Residue cysteine 87 is the Proton donor of the active site. Residues 88–89 (GN), asparagine 163, asparagine 199, and 217–218 (ER) contribute to the substrate site. Catalysis depends on cysteine 226, which acts as the Proton acceptor. 227-228 (GT) lines the substrate pocket.

It belongs to the diaminopimelate epimerase family. Homodimer.

It is found in the cytoplasm. It carries out the reaction (2S,6S)-2,6-diaminopimelate = meso-2,6-diaminopimelate. The protein operates within amino-acid biosynthesis; L-lysine biosynthesis via DAP pathway; DL-2,6-diaminopimelate from LL-2,6-diaminopimelate: step 1/1. Functionally, catalyzes the stereoinversion of LL-2,6-diaminopimelate (L,L-DAP) to meso-diaminopimelate (meso-DAP), a precursor of L-lysine and an essential component of the bacterial peptidoglycan. The sequence is that of Diaminopimelate epimerase from Mycolicibacterium gilvum (strain PYR-GCK) (Mycobacterium gilvum (strain PYR-GCK)).